The following is a 400-amino-acid chain: Lipase member N (400 aa).

The signal sequence occupies residues Met1–Ser19. An AB hydrolase-1 domain is found at Pro81 to Gly381. The active-site Nucleophile is Ser175. Cys249 and Cys258 form a disulfide bridge. Asn274 carries an N-linked (GlcNAc...) asparagine glycan. Catalysis depends on charge relay system residues Asp346 and His375.

The protein belongs to the AB hydrolase superfamily. Lipase family. In terms of tissue distribution, highly expressed in the epidermis. Also detected in other tissues, although at much lower levels, including liver and kidney.

Its subcellular location is the secreted. The catalysed reaction is a sterol ester + H2O = a sterol + a fatty acid + H(+). The enzyme catalyses a triacylglycerol + H2O = a 1,2-diacylglycerol + a fatty acid + H(+). It catalyses the reaction a triacylglycerol + H2O = a diacylglycerol + a fatty acid + H(+). It carries out the reaction a cholesterol ester + H2O = cholesterol + a fatty acid + H(+). Its function is as follows. Plays a highly specific role in the last step of keratinocyte differentiation. Contains two distinct domains: the alpha/beta hydrolase fold and the abhydrolase-associated lipase region, also features the consensus sequence of the active site of a genuine lipase. May have an essential function in lipid metabolism of the most differentiated epidermal layers. The chain is Lipase member N (Lipn) from Mus musculus (Mouse).